The primary structure comprises 473 residues: Ribulose bisphosphate carboxylase large chain (473 aa).

Substrate-binding residues include Asn-116 and Thr-166. Lys-168 (proton acceptor) is an active-site residue. A substrate-binding site is contributed by Lys-170. Residues Lys-194, Asp-196, and Glu-197 each coordinate Mg(2+). Lys-194 carries the N6-carboxylysine modification. The Proton acceptor role is filled by His-287. The substrate site is built by Arg-288, His-320, and Ser-372.

It belongs to the RuBisCO large chain family. Type I subfamily. Heterohexadecamer of 8 large chains and 8 small chains. It depends on Mg(2+) as a cofactor.

It carries out the reaction 2 (2R)-3-phosphoglycerate + 2 H(+) = D-ribulose 1,5-bisphosphate + CO2 + H2O. The catalysed reaction is D-ribulose 1,5-bisphosphate + O2 = 2-phosphoglycolate + (2R)-3-phosphoglycerate + 2 H(+). RuBisCO catalyzes two reactions: the carboxylation of D-ribulose 1,5-bisphosphate, the primary event in carbon dioxide fixation, as well as the oxidative fragmentation of the pentose substrate. Both reactions occur simultaneously and in competition at the same active site. This chain is Ribulose bisphosphate carboxylase large chain, found in Nitrobacter winogradskyi (Nitrobacter agilis).